A 512-amino-acid polypeptide reads, in one-letter code: Ribose import ATP-binding protein RbsA 2 (512 aa).

ABC transporter domains lie at 22–258 and 263–512; these read LEMR…VGRD and FPKV…TGNA. 54–61 serves as a coordination point for ATP; it reads GENGAGKS.

The protein belongs to the ABC transporter superfamily. Ribose importer (TC 3.A.1.2.1) family. As to quaternary structure, the complex is composed of an ATP-binding protein (RbsA), two transmembrane proteins (RbsC) and a solute-binding protein (RbsB).

It is found in the cell inner membrane. The catalysed reaction is D-ribose(out) + ATP + H2O = D-ribose(in) + ADP + phosphate + H(+). Functionally, part of the ABC transporter complex RbsABC involved in ribose import. Responsible for energy coupling to the transport system. In Rhizobium johnstonii (strain DSM 114642 / LMG 32736 / 3841) (Rhizobium leguminosarum bv. viciae), this protein is Ribose import ATP-binding protein RbsA 2.